The chain runs to 114 residues: Protein ORF3 (114 aa).

Hydrophobic stretches follow at residues 6-24 (WALG…CCSR) and 33-53 (AVVG…GLIL). The interaction with host HPX stretch occupies residues 28–68 (VSRLAAVVGGAAAVPAVVSGVTGLILSPSQSPIFIQPTPSP). Positions 48 to 72 (VTGLILSPSQSPIFIQPTPSPRMSP) are interaction with the capsid protein. Position 71 is a phosphoserine; by host (serine 71). The tract at residues 72-114 (PLRPGLDLVFANPSDHSAPLGATRPSAPPLPHVVDLPQLGPRR) is homodimerization, and interaction with host AMBP/bikunin. The interval 85-114 (SDHSAPLGATRPSAPPLPHVVDLPQLGPRR) is disordered. Positions 95-104 (RPSAPPLPHV) are interaction with host SRC, HCK, FYN, PIK3R3 and GRB2. A PTAP/PSAP motif motif is present at residues 96-99 (PSAP).

This sequence belongs to the hepevirus ORF3 protein family. In terms of assembly, forms homooligomers. Interacts with host SRC, HCK, FYN, PIK3R3 and GRB2 (via SH3 domain); binding does not activate the kinases. Interacts with host AMBP/bikunin and AMBP/alpha-1-microglobulin peptides. Interacts with host HPX/hemopexin. Interacts (when phosphorylated) with capsid protein ORF2. Interacts with host TSG101; this interaction plays a role in viral release from the host cell. Interacts with host SIRPA; this interaction down-regulates the phosphorylation of host IRF3. Post-translationally, palmitoylated in the N-terminus.

It localises to the host endoplasmic reticulum membrane. Its subcellular location is the host cytoplasm. It is found in the host cytoskeleton. The protein resides in the virion. The protein localises to the host cell membrane. In terms of biological role, small multifunctional phosphoprotein involved in virion morphogenesis, egress and counteracting host innate immunity. Plays critical roles in the final steps of viral release by interacting with host TSG101, a member of the vacuolar protein-sorting pathway and using other cellular host proteins involved in vesicle formation pathway. Also acts as a viroporin and forms ion conductive pores allowing viral particle release. Impairs the generation of type I interferon by down-regulating host TLR3 and TLR7 as well as their downstream signaling pathways. Down-regulates the phosphorylation of host IRF3 via the interaction with host SIRP-alpha, thereby inhibiting IFN-I expression. Interacts with host microtubules. The sequence is that of Protein ORF3 from Hepatitis E virus genotype 1 (isolate Human/India/Hyderabad) (HEV-1).